A 234-amino-acid chain; its full sequence is Octanoyltransferase (234 aa).

The 185-residue stretch at 42–226 (PDTPDEFWVV…ELASLIGYET (185 aa)) folds into the BPL/LPL catalytic domain. Substrate is bound by residues 81 to 88 (RGGQVTYH), 157 to 159 (SLG), and 170 to 172 (GLA). Cys188 functions as the Acyl-thioester intermediate in the catalytic mechanism.

It belongs to the LipB family.

The protein resides in the cytoplasm. It catalyses the reaction octanoyl-[ACP] + L-lysyl-[protein] = N(6)-octanoyl-L-lysyl-[protein] + holo-[ACP] + H(+). It participates in protein modification; protein lipoylation via endogenous pathway; protein N(6)-(lipoyl)lysine from octanoyl-[acyl-carrier-protein]: step 1/2. Functionally, catalyzes the transfer of endogenously produced octanoic acid from octanoyl-acyl-carrier-protein onto the lipoyl domains of lipoate-dependent enzymes. Lipoyl-ACP can also act as a substrate although octanoyl-ACP is likely to be the physiological substrate. This chain is Octanoyltransferase, found in Aeromonas hydrophila subsp. hydrophila (strain ATCC 7966 / DSM 30187 / BCRC 13018 / CCUG 14551 / JCM 1027 / KCTC 2358 / NCIMB 9240 / NCTC 8049).